Here is a 423-residue protein sequence, read N- to C-terminus: Probable M18 family aminopeptidase 2 (423 aa).

H84, H157, and H397 together coordinate Zn(2+).

This sequence belongs to the peptidase M18 family. It depends on Zn(2+) as a cofactor.

This chain is Probable M18 family aminopeptidase 2 (apeB), found in Borreliella burgdorferi (strain ATCC 35210 / DSM 4680 / CIP 102532 / B31) (Borrelia burgdorferi).